The primary structure comprises 91 residues: Large ribosomal subunit protein bL27 (91 aa).

The interval 1–20 (MAHKKGVGSSKNGRDSNPKY) is disordered.

It belongs to the bacterial ribosomal protein bL27 family.

In Deinococcus geothermalis (strain DSM 11300 / CIP 105573 / AG-3a), this protein is Large ribosomal subunit protein bL27.